Consider the following 683-residue polypeptide: DNA-directed RNA polymerase subunit beta' (683 aa).

Zn(2+) is bound by residues C69, C71, C87, and C90. The Mg(2+) site is built by D492, D494, and D496.

It belongs to the RNA polymerase beta' chain family. RpoC1 subfamily. In plastids the minimal PEP RNA polymerase catalytic core is composed of four subunits: alpha, beta, beta', and beta''. When a (nuclear-encoded) sigma factor is associated with the core the holoenzyme is formed, which can initiate transcription. The cofactor is Mg(2+). Requires Zn(2+) as cofactor.

The protein resides in the plastid. It is found in the chloroplast. The enzyme catalyses RNA(n) + a ribonucleoside 5'-triphosphate = RNA(n+1) + diphosphate. Its function is as follows. DNA-dependent RNA polymerase catalyzes the transcription of DNA into RNA using the four ribonucleoside triphosphates as substrates. This chain is DNA-directed RNA polymerase subunit beta', found in Coffea arabica (Arabian coffee).